The following is a 134-amino-acid chain: ATP synthase epsilon chain (134 aa).

The protein belongs to the ATPase epsilon chain family. As to quaternary structure, F-type ATPases have 2 components, CF(1) - the catalytic core - and CF(0) - the membrane proton channel. CF(1) has five subunits: alpha(3), beta(3), gamma(1), delta(1), epsilon(1). CF(0) has three main subunits: a, b and c. In this bacterium the a and b subunits are transcribed but do not seem to be translated, thus the ATP synthase consists of the alpha, beta, gamma, delta, epsilon and c subunits.

It localises to the cell membrane. Its function is as follows. Produces ATP from ADP in the presence of a proton gradient across the membrane. In Moorella thermoacetica (strain ATCC 39073 / JCM 9320), this protein is ATP synthase epsilon chain.